Here is a 423-residue protein sequence, read N- to C-terminus: Ferrochelatase, mitochondrial (423 aa).

A mitochondrion-targeting transit peptide spans 1-54 (MRSLGANMAAALRAAGVLLRDPLVSSSWRVYQPWRWKSVAAAAAATTETAQHAQ). The residue at position 57 (Lys-57) is an N6-acetyllysine. Positions 115, 123, and 130 each coordinate protoporphyrin IX. N6-succinyllysine is present on Lys-138. Cys-196 provides a ligand contact to [2Fe-2S] cluster. Catalysis depends on residues His-230 and Asp-383. The [2Fe-2S] cluster site is built by Cys-403, Cys-406, and Cys-411. Lys-415 is subject to N6-acetyllysine; alternate. Lys-415 is subject to N6-succinyllysine; alternate.

The protein belongs to the ferrochelatase family. As to quaternary structure, homodimer. Homotetramer. Interaction with PGRMC1; the interaction results in decreased FECH activity. Interacts with ABCB10 and SLC25A37; this interaction forms an oligomeric complex. Forms a complex with ABCB7 and ABCB10, where a dimeric FECH bridges ABCB7 and ABCB10 homodimers; this complex may be required for cellular iron homeostasis, mitochondrial function and heme biosynthesis. Interacts with ABCB7 and ABCB10. [2Fe-2S] cluster is required as a cofactor.

Its subcellular location is the mitochondrion inner membrane. It carries out the reaction heme b + 2 H(+) = protoporphyrin IX + Fe(2+). Its pathway is porphyrin-containing compound metabolism; protoheme biosynthesis; protoheme from protoporphyrin-IX: step 1/1. Functionally, catalyzes the ferrous insertion into protoporphyrin IX and participates in the terminal step in the heme biosynthetic pathway. The chain is Ferrochelatase, mitochondrial from Pan troglodytes (Chimpanzee).